Reading from the N-terminus, the 107-residue chain is MAIKKIKKDDTVIVITGRDKGRQGKVLKVLPNSRLLVEGINLVKKHVKPNPNKNEQGGILERELSIHVSNVAIYNPAAKKADRVGIKTLEDGSKVRIFKSNGEVIDV.

It belongs to the universal ribosomal protein uL24 family. Part of the 50S ribosomal subunit.

Its function is as follows. One of two assembly initiator proteins, it binds directly to the 5'-end of the 23S rRNA, where it nucleates assembly of the 50S subunit. Functionally, one of the proteins that surrounds the polypeptide exit tunnel on the outside of the subunit. The polypeptide is Large ribosomal subunit protein uL24 (Coxiella burnetii (strain Dugway 5J108-111)).